The chain runs to 175 residues: T-cell surface glycoprotein CD3 epsilon chain (175 aa).

Residues 1–21 form the signal peptide; sequence MRCEVPLPLLGLLLCVVGAAA. Residues 22 to 100 are Extracellular-facing; it reads QGGQEEFAVE…VCANCEELDT (79 aa). Residues 101-121 traverse the membrane as a helical segment; sequence FTVVGIIAADLLITLGVLILV. The Cytoplasmic portion of the chain corresponds to 122 to 175; the sequence is YYFSKNKKGQSRAAAGSRPRAQKMRRPPPVPNPDYEPIRKGQRDVYAGLEHRGF. The disordered stretch occupies residues 133–163; sequence RAAAGSRPRAQKMRRPPPVPNPDYEPIRKGQ. The ITAM domain occupies 146 to 173; it reads RRPPPVPNPDYEPIRKGQRDVYAGLEHR.

As to quaternary structure, the TCR/CD3 complex of T-lymphocytes consists of either a TCR alpha/beta or TCR gamma/delta heterodimer coexpressed at the cell surface with the invariant subunits of CD3 labeled gamma, delta, epsilon, zeta, and eta.

Its subcellular location is the cell membrane. In terms of biological role, the CD3 complex mediates signal transduction, resulting in T-cell activation and proliferation. Required for normal immune responses. The protein is T-cell surface glycoprotein CD3 epsilon chain (CD3E) of Gallus gallus (Chicken).